Here is a 440-residue protein sequence, read N- to C-terminus: Argininosuccinate lyase (440 aa).

This sequence belongs to the lyase 1 family. Argininosuccinate lyase subfamily.

The protein localises to the cytoplasm. It carries out the reaction 2-(N(omega)-L-arginino)succinate = fumarate + L-arginine. Its pathway is amino-acid biosynthesis; L-arginine biosynthesis; L-arginine from L-ornithine and carbamoyl phosphate: step 3/3. The chain is Argininosuccinate lyase from Clostridium botulinum (strain ATCC 19397 / Type A).